We begin with the raw amino-acid sequence, 913 residues long: Pentatricopeptide repeat-containing protein At1g10270 (913 aa).

The tract at residues 34–138 (SLSPANEDPE…PNAPRLPDST (105 aa)) is disordered. Positions 64–73 (DPSQFQIPQN) are enriched in polar residues. The segment covering 74-84 (HTPPIPYPPIP) has biased composition (pro residues). Residues 99-108 (ERRRRKRRLR) carry the Nuclear localization signal motif. The span at 108–130 (RIEPPLHALRRDPSAPPPKRDPN) shows a compositional bias: basic and acidic residues. Positions 134-167 (LPDSTSALVGQRLNLHNRVQSLIRASDLDAASKL) are leucine-zipper. PPR repeat units lie at residues 179 to 214 (TVFT…NIVP), 215 to 250 (NVVS…PFAP), 251 to 285 (SSVT…GQAA), 286 to 316 (DSTV…LKSK), 321 to 355 (DGIV…KFRM), 356 to 390 (HPPT…HAPP), 396 to 426 (NSDT…VGSK), 435 to 469 (DYLG…SLPA), 470 to 504 (DAPS…NLRV), 505 to 539 (VADF…EPKP), and 540 to 574 (DPSI…NVGV). Positions 607-913 (RNAGQSGNTP…QEKKVVELRN (307 aa)) are disordered. A compositionally biased stretch (polar residues) spans 639-649 (WTSQGVVHSNS). Low complexity-rich tracts occupy residues 650-666 (GWAN…AYKA) and 673-690 (SWSN…SNQT). The segment at 674–858 (WSNTSDNQQQ…TAQQQWSNQT (185 aa)) is 14 X 11 AA approximate tandem repeats of W-x(2)-Q-x(4)-Q-x(2). Residues 691-700 (AGQQPPSWSR) show a composition bias toward polar residues. The segment covering 706-727 (QQQQSWSQQSGWSSPSGHQQSW) has biased composition (low complexity). A compositionally biased stretch (polar residues) spans 728–761 (TNQTAGQQQPWANQTPGQQQQWANQTPGQQQQLA). A compositionally biased stretch (low complexity) spans 762-791 (NQTPGQQQQWANQTPGQQQQWANQNNGHQQ). Over residues 792-814 (PWANQNTGHQQSWANQTPSQQQP) the composition is skewed to polar residues. Residues 815 to 845 (WANQTTGQQQGWGNQTTGQQQQWANQTAGQQ) show a composition bias toward low complexity. 2 stretches are compositionally biased toward polar residues: residues 846–867 (SGWT…SQWL) and 875–894 (ANQT…QQEP). A compositionally biased stretch (basic and acidic residues) spans 899–913 (ECQETQEKKVVELRN).

This sequence belongs to the PPR family. P subfamily. Interacts with RPB36B through its WQQ domain. Ubiquitous but preferentially expressed in gametophytes and young embryos.

The protein localises to the nucleus. In terms of biological role, may function as a transcriptional regulator essential for early embryogenesis. The polypeptide is Pentatricopeptide repeat-containing protein At1g10270 (GRP23) (Arabidopsis thaliana (Mouse-ear cress)).